The following is a 725-amino-acid chain: MADNENRLESILSRFDADWTASDEARREAKNDLFFSRVSQWDDWLSQYTTLQYRGQFDVVRPVVRKLVSEMRQNPIDVLYRPKDGARPDAADVLMGMYRTDMRHNTAKIAVNIAVREQIEAGVGAWRLVTDYEDQSPTSNNQVIRREPIHSACSHVIWDSNSKLMDKSDARHCTVIHSMSQNGWEDFAEKYDLDADDIPSFQNPNDWVFPWLTQDTIQIAEFYEVVEKKETAFIYQDPVTGEPVSYFKRDIKDVIDDLADSGFIKIAERQIKRRRVYKSIITCTAVLKDKQLIAGEHIPIVPVFGEWGFVEDKEVYEGVVRLTKDGQRLRNMIMSFNADIVARTPKKKPFFWPEQIAGFEHMYDGNDDYPYYLLNRTDENSGDLPTQPLAYYENPEVPQANAYMLEAATSAVKEVATLGVDTEAVNGGQVAFDTVNQLNMRADLETYVFQDNLATAMRRDGEIYQSIVNDIYDVPRNVTITLEDGSEKDVQLMAEVVDLATGEKQVLNDIRGRYECYTDVGPSFQSMKQQNRAEILELLGKTPQGTPEYQLLLLQYFTLLDGKGVEMMRDYANKQLIQMGVKKPETPEEQQWLVEAQQAKQGQQDPAMVQAQGVLLQGQAELAKAQNQTLSLQIDAAKVEAQNQLNAARIAEIFNNMDLSKQSEFREFLKTVASFQQDRSEDARANAELLLKGDEQTHKQRMDIANILQSQRQNQPSGSVAETPQ.

The protein belongs to the p22likevirus portal protein family. In terms of assembly, homododecamer. Interacts with the terminase large subunit; this interaction allows the packaging of viral DNA. Interacts (via C-terminus) with the head-to-tail adapter protein gp4; this interaction participates in the head completion. Interacts with the scaffolding protein; this interaction initiates procapsid assembly, thereby ensuring incorporation of only one portal ring per capsid. Interacts with the capsid protein.

It localises to the virion. Its function is as follows. Forms the portal vertex of the capsid. This portal plays critical roles in head assembly, genome packaging, neck/tail attachment, and genome ejection. Procapsid assembly may initiate with a nucleation complex composed of portal and scaffolding proteins. The portal protein multimerizes as a single ring-shaped homododecamer arranged around a central channel. Switches upon genome packaging from an asymmetrical conformation in the procapsid (PC-portal) to a symmetrical ring in the mature capsid (MV-portal). This change of conformation may serve as a signal for headful packaging. This chain is Portal protein (1), found in Salmonella typhimurium (Bacteriophage P22).